The sequence spans 208 residues: Transmembrane emp24 domain-containing protein p24beta2 (208 aa).

The first 21 residues, 1-21, serve as a signal peptide directing secretion; it reads MSLKGTIVLLGLLWSFQATLG. The Lumenal segment spans residues 22–176; sequence IRFVIDREEC…ENMSKRAVHK (155 aa). Residues 29-116 enclose the GOLD domain; that stretch reads EECFSHKAEY…HETIDFDVQL (88 aa). Residues 134–149 are a coiled coil; sequence LMEQISKLEEALYNIQ. The N-linked (GlcNAc...) asparagine glycan is linked to N168. A helical membrane pass occupies residues 177 to 195; that stretch reads ALFESFALIGASFLQVYLL. Residues 196-208 lie on the Cytoplasmic side of the membrane; sequence RRLFERKLGMSRV. The COPII vesicle coat-binding signature appears at 198–199; it reads LF. The COPI vesicle coat-binding signature appears at 198–208; sequence LFERKLGMSRV. The Required for the export from the endoplasmic reticulum to the Golgi signature appears at 207-208; the sequence is RV.

The protein belongs to the EMP24/GP25L family. As to quaternary structure, probably oligomerizes with other members of the EMP24/GP25L family. Associates with the COPI vesicle coat (coatomer). Associates with the COPII vesicle coat (coatomer). Interacts with p24delta5.

Its subcellular location is the golgi apparatus. The protein localises to the cis-Golgi network membrane. It localises to the golgi stack membrane. Its function is as follows. Involved in vesicular protein trafficking. Mainly functions in the early secretory pathway but also in post-Golgi membranes. Thought to act as cargo receptor at the lumenal side for incorporation of secretory cargo molecules into transport vesicles and to be involved in vesicle coat formation at the cytoplasmic side. Interacts with p24delta5 at endoplasmic reticulum export sites for endoplasmic reticulum exit and coupled transport to the Golgi apparatus. The chain is Transmembrane emp24 domain-containing protein p24beta2 from Arabidopsis thaliana (Mouse-ear cress).